Here is a 432-residue protein sequence, read N- to C-terminus: Adenylosuccinate synthetase (432 aa).

Residues Gly12–Lys18 and Gly40–Thr42 each bind GTP. Asp13 (proton acceptor) is an active-site residue. Asp13 and Gly40 together coordinate Mg(2+). IMP contacts are provided by residues Asp13 to Lys16, Asn38 to His41, Thr130, Arg144, Gln225, Thr240, and Arg304. His41 functions as the Proton donor in the catalytic mechanism. Ser300–Arg306 contributes to the substrate binding site. Residues Arg306, Lys332–Asp334, and Ser414–Gly416 contribute to the GTP site.

This sequence belongs to the adenylosuccinate synthetase family. Homodimer. Mg(2+) is required as a cofactor.

The protein resides in the cytoplasm. It catalyses the reaction IMP + L-aspartate + GTP = N(6)-(1,2-dicarboxyethyl)-AMP + GDP + phosphate + 2 H(+). Its pathway is purine metabolism; AMP biosynthesis via de novo pathway; AMP from IMP: step 1/2. In terms of biological role, plays an important role in the de novo pathway of purine nucleotide biosynthesis. Catalyzes the first committed step in the biosynthesis of AMP from IMP. This Citrifermentans bemidjiense (strain ATCC BAA-1014 / DSM 16622 / JCM 12645 / Bem) (Geobacter bemidjiensis) protein is Adenylosuccinate synthetase.